The primary structure comprises 208 residues: Small ribosomal subunit protein uS4 (208 aa).

Residues 98-158 (GRLDNVVYRM…EKSKKQARIK (61 aa)) form the S4 RNA-binding domain.

It belongs to the universal ribosomal protein uS4 family. As to quaternary structure, part of the 30S ribosomal subunit. Contacts protein S5. The interaction surface between S4 and S5 is involved in control of translational fidelity.

Its function is as follows. One of the primary rRNA binding proteins, it binds directly to 16S rRNA where it nucleates assembly of the body of the 30S subunit. Functionally, with S5 and S12 plays an important role in translational accuracy. The sequence is that of Small ribosomal subunit protein uS4 from Haemophilus ducreyi (strain 35000HP / ATCC 700724).